A 576-amino-acid polypeptide reads, in one-letter code: D-lactate dehydrogenase [cytochrome], mitochondrial (576 aa).

The 182-residue stretch at 139-320 (EANQRPEIVL…TEATIKCHVR (182 aa)) folds into the FAD-binding PCMH-type domain.

The protein belongs to the FAD-binding oxidoreductase/transferase type 4 family. The cofactor is FAD. It depends on Zn(2+) as a cofactor.

The protein localises to the mitochondrion matrix. It carries out the reaction (R)-lactate + 2 Fe(III)-[cytochrome c] = 2 Fe(II)-[cytochrome c] + pyruvate + 2 H(+). Catalyzes the stereospecific oxidation of D-lactate to pyruvate. The polypeptide is D-lactate dehydrogenase [cytochrome], mitochondrial (DLD1) (Kluyveromyces lactis (strain ATCC 8585 / CBS 2359 / DSM 70799 / NBRC 1267 / NRRL Y-1140 / WM37) (Yeast)).